A 70-amino-acid chain; its full sequence is DNA-directed RNA polymerase subunit omega (70 aa).

Belongs to the RNA polymerase subunit omega family. In terms of assembly, in cyanobacteria the RNAP catalytic core is composed of 2 alpha, 1 beta, 1 beta', 1 gamma and 1 omega subunit. When a sigma factor is associated with the core the holoenzyme is formed, which can initiate transcription.

The catalysed reaction is RNA(n) + a ribonucleoside 5'-triphosphate = RNA(n+1) + diphosphate. Functionally, promotes RNA polymerase assembly. Latches the N- and C-terminal regions of the beta' subunit thereby facilitating its interaction with the beta and alpha subunits. This is DNA-directed RNA polymerase subunit omega from Prochlorococcus marinus (strain NATL1A).